We begin with the raw amino-acid sequence, 242 residues long: MSAVDYGREALDFIEGLGVYRKVPDAMNALEAAFGRFGFETIIVTGLPNPDQRFAQMVLAKRWPAGWFNLYTQNNYDRFDPVVRLCRQSVNPFEWSEAPYDAELEPSAAEVMNRAGDFRMSRGFIVPIHGLTGYEAAVSLGGVHLDLNPRSKPALHLMAMYGFDHIRRLLEPTPYPSTRLTPREREVISWASQGKSAWEIGEILHITQRTAEEHLATAARKLGAVNRTHAVALAIRHKIINP.

The 66-residue stretch at 173 to 238 folds into the HTH luxR-type domain; sequence TPYPSTRLTP…HAVALAIRHK (66 aa). Residues 197–216 constitute a DNA-binding region (H-T-H motif); it reads AWEIGEILHITQRTAEEHLA.

It belongs to the autoinducer-regulated transcriptional regulatory protein family.

Functionally, transcriptional activator that functions in response to the quorum-sensing autoinducer IV-HSL (isovaleryl-homoserine lactone). Activates BjaI expression. Is sensitive to IV-HSL at concentrations as low as 10 pM. The chain is Transcriptional activator protein BjaR1 (bjaR1) from Bradyrhizobium diazoefficiens (strain JCM 10833 / BCRC 13528 / IAM 13628 / NBRC 14792 / USDA 110).